The primary structure comprises 401 residues: Argininosuccinate synthase (401 aa).

An ATP-binding site is contributed by 8–16 (AYSGGLDTS). L-citrulline-binding residues include Tyr-86 and Ser-91. Gly-116 lines the ATP pocket. Positions 118, 122, and 123 each coordinate L-aspartate. Asn-122 is an L-citrulline binding site. The L-citrulline site is built by Arg-126, Ser-175, Ser-184, Glu-260, and Tyr-272.

Belongs to the argininosuccinate synthase family. Type 1 subfamily. Homotetramer.

It localises to the cytoplasm. It catalyses the reaction L-citrulline + L-aspartate + ATP = 2-(N(omega)-L-arginino)succinate + AMP + diphosphate + H(+). It functions in the pathway amino-acid biosynthesis; L-arginine biosynthesis; L-arginine from L-ornithine and carbamoyl phosphate: step 2/3. The protein is Argininosuccinate synthase of Clostridium kluyveri (strain ATCC 8527 / DSM 555 / NBRC 12016 / NCIMB 10680 / K1).